Here is a 260-residue protein sequence, read N- to C-terminus: 3'-5' ssDNA/RNA exonuclease TatD (260 aa).

Residues Glu91, His127, and His152 each coordinate a divalent metal cation.

This sequence belongs to the metallo-dependent hydrolases superfamily. TatD-type hydrolase family. TatD subfamily. In terms of assembly, monomer. It depends on Mg(2+) as a cofactor.

The protein resides in the cytoplasm. In terms of biological role, 3'-5' exonuclease that prefers single-stranded DNA and RNA. May play a role in the H(2)O(2)-induced DNA damage repair. The chain is 3'-5' ssDNA/RNA exonuclease TatD from Citrobacter koseri (strain ATCC BAA-895 / CDC 4225-83 / SGSC4696).